The sequence spans 304 residues: Methionyl-tRNA formyltransferase (304 aa).

Ser111–Pro114 lines the (6S)-5,6,7,8-tetrahydrofolate pocket.

The protein belongs to the Fmt family.

The enzyme catalyses L-methionyl-tRNA(fMet) + (6R)-10-formyltetrahydrofolate = N-formyl-L-methionyl-tRNA(fMet) + (6S)-5,6,7,8-tetrahydrofolate + H(+). Functionally, attaches a formyl group to the free amino group of methionyl-tRNA(fMet). The formyl group appears to play a dual role in the initiator identity of N-formylmethionyl-tRNA by promoting its recognition by IF2 and preventing the misappropriation of this tRNA by the elongation apparatus. This chain is Methionyl-tRNA formyltransferase, found in Campylobacter fetus subsp. fetus (strain 82-40).